The primary structure comprises 255 residues: Developmental and secondary metabolism regulator MVE1 (255 aa).

In terms of domain architecture, Velvet spans 31 to 226 (GRKLTYRMSV…AEQGCRVRIR (196 aa)). Residues 45 to 50 (VRARAC) carry the Nuclear localization signal motif. Disordered stretches follow at residues 163 to 184 (CKSP…DAHV) and 229 to 255 (VRMR…QARA). Over residues 245 to 255 (NYEDETAQARA) the composition is skewed to acidic residues.

This sequence belongs to the velvet family. VeA subfamily. In terms of assembly, component of the heterotrimeric velvet complex composed of LAE1, MVE1 and VEL2; MVE1 acting as a bridging protein between LAE1 and VEL2.

It is found in the nucleus. It localises to the cytoplasm. Its function is as follows. Component of the velvet transcription factor complex that controls sexual/asexual developmental ratio in response to light, promoting sexual development in the darkness while stimulating asexual sporulation under illumination. The velvet complex hat acts as a global regulator for secondary metabolite gene expression. Controls the expression of the melanin gene cluster. Mediates the light-stimulated formation of aerial mycelia. This chain is Developmental and secondary metabolism regulator MVE1, found in Zymoseptoria tritici (strain CBS 115943 / IPO323) (Speckled leaf blotch fungus).